Reading from the N-terminus, the 275-residue chain is 3-methyl-2-oxobutanoate hydroxymethyltransferase (275 aa).

Positions 51 and 90 each coordinate Mg(2+). 3-methyl-2-oxobutanoate-binding positions include 51 to 52 (DS), D90, and K120. E122 provides a ligand contact to Mg(2+). Catalysis depends on E189, which acts as the Proton acceptor.

This sequence belongs to the PanB family. In terms of assembly, homodecamer; pentamer of dimers. Requires Mg(2+) as cofactor.

It is found in the cytoplasm. The enzyme catalyses 3-methyl-2-oxobutanoate + (6R)-5,10-methylene-5,6,7,8-tetrahydrofolate + H2O = 2-dehydropantoate + (6S)-5,6,7,8-tetrahydrofolate. It functions in the pathway cofactor biosynthesis; (R)-pantothenate biosynthesis; (R)-pantoate from 3-methyl-2-oxobutanoate: step 1/2. Functionally, catalyzes the reversible reaction in which hydroxymethyl group from 5,10-methylenetetrahydrofolate is transferred onto alpha-ketoisovalerate to form ketopantoate. The chain is 3-methyl-2-oxobutanoate hydroxymethyltransferase from Caulobacter vibrioides (strain ATCC 19089 / CIP 103742 / CB 15) (Caulobacter crescentus).